Consider the following 137-residue polypeptide: Small ribosomal subunit protein uS12 (137 aa).

The tract at residues 1-44 (MPTINQLVRKGRKSRTSKSDAPALNFGYNSMKKKATDNPAPQKR) is disordered. At D102 the chain carries 3-methylthioaspartic acid.

This sequence belongs to the universal ribosomal protein uS12 family. In terms of assembly, part of the 30S ribosomal subunit. Contacts proteins S8 and S17. May interact with IF1 in the 30S initiation complex.

Functionally, with S4 and S5 plays an important role in translational accuracy. Interacts with and stabilizes bases of the 16S rRNA that are involved in tRNA selection in the A site and with the mRNA backbone. Located at the interface of the 30S and 50S subunits, it traverses the body of the 30S subunit contacting proteins on the other side and probably holding the rRNA structure together. The combined cluster of proteins S8, S12 and S17 appears to hold together the shoulder and platform of the 30S subunit. The sequence is that of Small ribosomal subunit protein uS12 from Latilactobacillus sakei subsp. sakei (strain 23K) (Lactobacillus sakei subsp. sakei).